A 201-amino-acid polypeptide reads, in one-letter code: Dephospho-CoA kinase (201 aa).

The DPCK domain occupies 3 to 201 (IIGLTGGMAA…ALLHRLREAS (199 aa)). An ATP-binding site is contributed by 11–16 (AAGKST).

Belongs to the CoaE family.

It is found in the cytoplasm. The catalysed reaction is 3'-dephospho-CoA + ATP = ADP + CoA + H(+). Its pathway is cofactor biosynthesis; coenzyme A biosynthesis; CoA from (R)-pantothenate: step 5/5. Its function is as follows. Catalyzes the phosphorylation of the 3'-hydroxyl group of dephosphocoenzyme A to form coenzyme A. The sequence is that of Dephospho-CoA kinase from Gluconobacter oxydans (strain 621H) (Gluconobacter suboxydans).